We begin with the raw amino-acid sequence, 322 residues long: Ribonuclease Z (322 aa).

Histidine 62, histidine 64, aspartate 66, histidine 67, histidine 143, aspartate 215, and histidine 273 together coordinate Zn(2+). The active-site Proton acceptor is the aspartate 66. The segment covering 300–314 has biased composition (basic and acidic residues); sequence ELRRYELDPREKEPD. The interval 300-322 is disordered; it reads ELRRYELDPREKEPDPVGPADES.

The protein belongs to the RNase Z family. As to quaternary structure, homodimer. Zn(2+) is required as a cofactor.

It catalyses the reaction Endonucleolytic cleavage of RNA, removing extra 3' nucleotides from tRNA precursor, generating 3' termini of tRNAs. A 3'-hydroxy group is left at the tRNA terminus and a 5'-phosphoryl group is left at the trailer molecule.. Its function is as follows. Zinc phosphodiesterase, which displays some tRNA 3'-processing endonuclease activity. Probably involved in tRNA maturation, by removing a 3'-trailer from precursor tRNA. The sequence is that of Ribonuclease Z from Salinibacter ruber (strain DSM 13855 / M31).